Reading from the N-terminus, the 196-residue chain is Pyridoxal 5'-phosphate synthase subunit PdxT (196 aa).

L-glutamine is bound at residue 46 to 48; that stretch reads GES. Residue Cys-78 is the Nucleophile of the active site. L-glutamine-binding positions include Arg-110 and 138-139; that span reads IR. Catalysis depends on charge relay system residues His-174 and Glu-176.

This sequence belongs to the glutaminase PdxT/SNO family. In the presence of PdxS, forms a dodecamer of heterodimers. Only shows activity in the heterodimer.

It catalyses the reaction aldehydo-D-ribose 5-phosphate + D-glyceraldehyde 3-phosphate + L-glutamine = pyridoxal 5'-phosphate + L-glutamate + phosphate + 3 H2O + H(+). It carries out the reaction L-glutamine + H2O = L-glutamate + NH4(+). The protein operates within cofactor biosynthesis; pyridoxal 5'-phosphate biosynthesis. Its function is as follows. Catalyzes the hydrolysis of glutamine to glutamate and ammonia as part of the biosynthesis of pyridoxal 5'-phosphate. The resulting ammonia molecule is channeled to the active site of PdxS. This chain is Pyridoxal 5'-phosphate synthase subunit PdxT, found in Deinococcus radiodurans (strain ATCC 13939 / DSM 20539 / JCM 16871 / CCUG 27074 / LMG 4051 / NBRC 15346 / NCIMB 9279 / VKM B-1422 / R1).